The chain runs to 146 residues: Hemoglobin subunit beta (146 aa).

One can recognise a Globin domain in the interval 2–146; that stretch reads QWSAEEKQLI…VAHALARKYH (145 aa). Residues histidine 63 and histidine 92 each contribute to the heme b site.

It belongs to the globin family. As to quaternary structure, heterotetramer of two alpha chains and two beta chains. As to expression, red blood cells.

In terms of biological role, involved in oxygen transport from the lung to the various peripheral tissues. This chain is Hemoglobin subunit beta (HBB), found in Struthio camelus (Common ostrich).